The chain runs to 388 residues: D-alanyl-D-alanine carboxypeptidase DacD (388 aa).

The first 21 residues, 1-21 (MKRRLIIAASLFVFNLSSGFA), serve as a signal peptide directing secretion. Catalysis depends on S63, which acts as the Acyl-ester intermediate. K66 serves as the catalytic Proton acceptor. Residue S129 is part of the active site. Position 232 (K232) interacts with substrate.

It belongs to the peptidase S11 family.

Its subcellular location is the cell inner membrane. It carries out the reaction Preferential cleavage: (Ac)2-L-Lys-D-Ala-|-D-Ala. Also transpeptidation of peptidyl-alanyl moieties that are N-acyl substituents of D-alanine.. The protein operates within cell wall biogenesis; peptidoglycan biosynthesis. In terms of biological role, removes C-terminal D-alanyl residues from sugar-peptide cell wall precursors. This Escherichia coli (strain K12) protein is D-alanyl-D-alanine carboxypeptidase DacD (dacD).